The primary structure comprises 335 residues: Fructose-1,6-bisphosphatase class 1 1 (335 aa).

E92, D114, L116, and D117 together coordinate Mg(2+). Substrate-binding positions include 117-120, N209, and K275; that span reads DGSS. E281 is a Mg(2+) binding site.

Belongs to the FBPase class 1 family. In terms of assembly, homotetramer. Requires Mg(2+) as cofactor.

Its subcellular location is the cytoplasm. The catalysed reaction is beta-D-fructose 1,6-bisphosphate + H2O = beta-D-fructose 6-phosphate + phosphate. It functions in the pathway carbohydrate biosynthesis; gluconeogenesis. The protein is Fructose-1,6-bisphosphatase class 1 1 of Polaromonas naphthalenivorans (strain CJ2).